The following is a 413-amino-acid chain: Divalent metal cation transporter MntH (413 aa).

Transmembrane regions (helical) follow at residues 19-39 (LALM…GNFA), 46-66 (ASFG…AMLI), 94-114 (VWFY…AEFI), 122-142 (LVLG…TFLI), 156-176 (VIGG…IFSQ), 196-216 (AVFL…IYLH), 241-261 (IAMT…AAAF), 290-310 (IFGL…TLAG), 329-349 (AVTM…TRIL), 350-370 (VMSQ…LLIF), and 392-412 (VIVA…LLGV).

This sequence belongs to the NRAMP family.

Its subcellular location is the cell inner membrane. In terms of biological role, h(+)-stimulated, divalent metal cation uptake system. The polypeptide is Divalent metal cation transporter MntH (Klebsiella pneumoniae (strain 342)).